We begin with the raw amino-acid sequence, 133 residues long: Small ribosomal subunit protein uS11 (133 aa).

The protein belongs to the universal ribosomal protein uS11 family. In terms of assembly, part of the 30S ribosomal subunit. Interacts with proteins S7 and S18. Binds to IF-3.

Located on the platform of the 30S subunit, it bridges several disparate RNA helices of the 16S rRNA. Forms part of the Shine-Dalgarno cleft in the 70S ribosome. The protein is Small ribosomal subunit protein uS11 of Burkholderia pseudomallei (strain 1106a).